A 419-amino-acid polypeptide reads, in one-letter code: Divinyl chlorophyllide a 8-vinyl-reductase, chloroplastic (419 aa).

The N-terminal 71 residues, 1-71, are a transit peptide targeting the chloroplast; it reads MSICSTVGAG…PIVVSSTPVV (71 aa).

It is found in the plastid. It localises to the chloroplast. The enzyme catalyses protochlorophyllide a + NADP(+) = 3,8-divinyl protochlorophyllide a + NADPH + H(+). The protein operates within porphyrin-containing compound metabolism; chlorophyll biosynthesis. Functionally, catalyzes the conversion of divinyl chlorophyllide to monovinyl chlorophyllide. Reduces the 8-vinyl group of the tetrapyrrole to an ethyl group using NADPH as the reductant. The best substrate is (3,8-divinyl)-chlorophyllide a (DV-Chlidea). Very low activity with (3,8-divinyl)-protochlorophyllide a (DV-Pchlidea) and (3,8-divinyl)-magnesium-protoporphyrin IX monomethyl ester (DV-MPE). No activity with (3,8-divinyl)-magnesium-protoporphyrin IX (DV-Mg-Proto) and (3,8-divinyl)-chlorophyll a (DV-Chla). This Cucumis sativus (Cucumber) protein is Divinyl chlorophyllide a 8-vinyl-reductase, chloroplastic (DVR).